We begin with the raw amino-acid sequence, 169 residues long: Crossover junction endodeoxyribonuclease RuvC (169 aa).

Active-site residues include Asp-11, Glu-71, and Asp-143. Mg(2+) contacts are provided by Asp-11, Glu-71, and Asp-143.

Belongs to the RuvC family. As to quaternary structure, homodimer which binds Holliday junction (HJ) DNA. The HJ becomes 2-fold symmetrical on binding to RuvC with unstacked arms; it has a different conformation from HJ DNA in complex with RuvA. In the full resolvosome a probable DNA-RuvA(4)-RuvB(12)-RuvC(2) complex forms which resolves the HJ. Mg(2+) serves as cofactor.

The protein localises to the cytoplasm. It carries out the reaction Endonucleolytic cleavage at a junction such as a reciprocal single-stranded crossover between two homologous DNA duplexes (Holliday junction).. In terms of biological role, the RuvA-RuvB-RuvC complex processes Holliday junction (HJ) DNA during genetic recombination and DNA repair. Endonuclease that resolves HJ intermediates. Cleaves cruciform DNA by making single-stranded nicks across the HJ at symmetrical positions within the homologous arms, yielding a 5'-phosphate and a 3'-hydroxyl group; requires a central core of homology in the junction. The consensus cleavage sequence is 5'-(A/T)TT(C/G)-3'. Cleavage occurs on the 3'-side of the TT dinucleotide at the point of strand exchange. HJ branch migration catalyzed by RuvA-RuvB allows RuvC to scan DNA until it finds its consensus sequence, where it cleaves and resolves the cruciform DNA. This Allorhizobium ampelinum (strain ATCC BAA-846 / DSM 112012 / S4) (Agrobacterium vitis (strain S4)) protein is Crossover junction endodeoxyribonuclease RuvC.